Consider the following 367-residue polypeptide: Heme A synthase (367 aa).

Helical transmembrane passes span 25-45 (ALRL…LVGG), 111-131 (LIAR…WLTG), 139-159 (WPLV…WWMV), 174-194 (LATH…IMRG), 210-230 (GLAA…ALVA), 272-292 (FIHR…MVIA), 305-325 (AVLL…TLLM), and 327-347 (VPLH…GFAV). Histidine 274 serves as a coordination point for heme. Heme is bound at residue histidine 335.

It belongs to the COX15/CtaA family. Type 2 subfamily. In terms of assembly, interacts with CtaB. The cofactor is heme b.

The protein resides in the cell membrane. The catalysed reaction is Fe(II)-heme o + 2 A + H2O = Fe(II)-heme a + 2 AH2. It functions in the pathway porphyrin-containing compound metabolism; heme A biosynthesis; heme A from heme O: step 1/1. In terms of biological role, catalyzes the conversion of heme O to heme A by two successive hydroxylations of the methyl group at C8. The first hydroxylation forms heme I, the second hydroxylation results in an unstable dihydroxymethyl group, which spontaneously dehydrates, resulting in the formyl group of heme A. The chain is Heme A synthase from Rhizobium etli (strain ATCC 51251 / DSM 11541 / JCM 21823 / NBRC 15573 / CFN 42).